Reading from the N-terminus, the 609-residue chain is 2',5'-phosphodiesterase 12 (609 aa).

The N-terminal 16 residues, 1–16, are a transit peptide targeting the mitochondrion; sequence MWRLPGVRAALRGVRT. Residues 203-231 form a disordered region; the sequence is PRAAEPEGGGPSSSSPSSPSPGWTETGVD. Residues 214-224 are compositionally biased toward low complexity; that stretch reads SSSSPSSPSPG. Position 217 is a phosphoserine (S217). Residues E351, D496, and N498 each coordinate Mg(2+). The Proton donor/acceptor role is filled by D496.

It belongs to the CCR4/nocturin family. The cofactor is Mg(2+). Liver.

The protein resides in the mitochondrion matrix. It carries out the reaction Exonucleolytic cleavage of poly(A) to 5'-AMP.. In terms of biological role, enzyme that cleaves 2',5'-phosphodiester bond linking adenosines of the 5'-triphosphorylated oligoadenylates, triphosphorylated oligoadenylates referred as 2-5A modulates the 2-5A system. Degrades triphosphorylated 2-5A to produce AMP and ATP. Also cleaves 3',5'-phosphodiester bond of oligoadenylates. Plays a role as a negative regulator of the 2-5A system that is one of the major pathways for antiviral and antitumor functions induced by interferons (IFNs). Suppression of this enzyme increases cellular 2-5A levels and decreases viral replication in cultured small-airway epithelial cells. The chain is 2',5'-phosphodiesterase 12 (PDE12) from Bos taurus (Bovine).